Consider the following 63-residue polypeptide: uncharacterized protein (63 aa).

The signal sequence occupies residues methionine 1–alanine 21.

This is an uncharacterized protein from Haemophilus influenzae (strain ATCC 51907 / DSM 11121 / KW20 / Rd).